Here is a 1016-residue protein sequence, read N- to C-terminus: Primary septum glucan endo-1,3-beta-D-glucosidase (1016 aa).

Positions M1 to C20 are cleaved as a signal peptide. N37 carries N-linked (GlcNAc...) asparagine glycosylation. The segment at T45–P272 is beta-sandwich subdomain. One can recognise a GH81 domain in the interval T45–D741. Residues L273–A364 are alpha/beta subdomain. A (alpha/beta)6 barrel subdomain region spans residues G379 to D741. D492 is an active-site residue. H496, D567, E569, E573, and Y650 together coordinate (1,3-beta-D-glucosyl)n. Active-site residues include E569 and E573. A required for catalytic activity against insoluble beta-glucan and to restrict localization of the enzyme to the cell septum region spans residues S748 to A1016. Residues S844–T872 are disordered.

It belongs to the glycosyl hydrolase 81 family.

Its subcellular location is the cell septum. The enzyme catalyses Hydrolysis of (1-&gt;3)-beta-D-glucosidic linkages in (1-&gt;3)-beta-D-glucans.. In terms of biological role, cleaves internal linkages in 1,3-beta-glucan. Has a role in cell separation where it is required for the degradation of the primary septum after completion of cytokinesis. This Schizosaccharomyces pombe (strain 972 / ATCC 24843) (Fission yeast) protein is Primary septum glucan endo-1,3-beta-D-glucosidase.